Reading from the N-terminus, the 914-residue chain is Isoleucine--tRNA ligase (914 aa).

The short motif at 64 to 74 (PYANGNFHLGH) is the 'HIGH' region element. An L-isoleucyl-5'-AMP-binding site is contributed by E557. Residues 598–602 (AMSKS) carry the 'KMSKS' region motif. K601 serves as a coordination point for ATP. Positions 889, 892, 906, and 909 each coordinate Zn(2+).

This sequence belongs to the class-I aminoacyl-tRNA synthetase family. IleS type 1 subfamily. As to quaternary structure, monomer. Zn(2+) serves as cofactor.

It is found in the cytoplasm. The enzyme catalyses tRNA(Ile) + L-isoleucine + ATP = L-isoleucyl-tRNA(Ile) + AMP + diphosphate. Functionally, catalyzes the attachment of isoleucine to tRNA(Ile). As IleRS can inadvertently accommodate and process structurally similar amino acids such as valine, to avoid such errors it has two additional distinct tRNA(Ile)-dependent editing activities. One activity is designated as 'pretransfer' editing and involves the hydrolysis of activated Val-AMP. The other activity is designated 'posttransfer' editing and involves deacylation of mischarged Val-tRNA(Ile). The chain is Isoleucine--tRNA ligase from Leptospira borgpetersenii serovar Hardjo-bovis (strain JB197).